A 392-amino-acid polypeptide reads, in one-letter code: uncharacterized protein (392 aa).

It belongs to the chlamydial CPn_0675/CT_696/TC_0068 family.

This is an uncharacterized protein from Chlamydia trachomatis serovar D (strain ATCC VR-885 / DSM 19411 / UW-3/Cx).